Consider the following 561-residue polypeptide: Long-chain-fatty-acid--CoA ligase (561 aa).

Residue Tyr213–Ala224 participates in ATP binding.

The protein belongs to the ATP-dependent AMP-binding enzyme family. The cofactor is Mg(2+).

It localises to the membrane. It catalyses the reaction a long-chain fatty acid + ATP + CoA = a long-chain fatty acyl-CoA + AMP + diphosphate. It participates in lipid metabolism; fatty acid beta-oxidation. In terms of biological role, catalyzes the esterification, concomitant with transport, of exogenous long-chain fatty acids into metabolically active CoA thioesters for subsequent degradation or incorporation into phospholipids. This chain is Long-chain-fatty-acid--CoA ligase (fadD), found in Escherichia coli O157:H7.